Reading from the N-terminus, the 421-residue chain is Probable N-acetylgalactosaminyltransferase 8 (421 aa).

Over 1 to 3 (MRR) the chain is Cytoplasmic. The chain crosses the membrane as a helical; Signal-anchor for type II membrane protein span at residues 4–24 (HVVLSIFVFAGIVFAAEEAEK). Topologically, residues 25 to 421 (LPKCEHVDPY…ELEPKVHDEL (397 aa)) are lumenal. N-linked (GlcNAc...) asparagine glycans are attached at residues N52 and N58. 2 disulfides stabilise this stretch: C98-C331 and C322-C399. The interval 106 to 219 (SYSTSVVVIH…ERWLEPLLQP (114 aa)) is catalytic subdomain A. D147 and R180 together coordinate substrate. Residue D203 participates in Mn(2+) binding. Position 204 (S204) interacts with substrate. A Mn(2+)-binding site is contributed by H205. The tract at residues 277–339 (PFNSPAMPGG…PCSRVGHVFR (63 aa)) is catalytic subdomain B. W308 contributes to the substrate binding site. H336 is a Mn(2+) binding site. 2 residues coordinate substrate: R339 and Y344. The Prevents secretion from ER signature appears at 418–421 (HDEL).

This sequence belongs to the glycosyltransferase 2 family. GalNAc-T subfamily. The cofactor is Mn(2+).

It localises to the golgi apparatus membrane. Its pathway is protein modification; protein glycosylation. Its function is as follows. Potential glycopeptide transferase involved in O-linked oligosaccharide biosynthesis. In contrast to other members of the family, it does not act as a peptide transferase that transfers GalNAc onto serine or threonine residue on peptides that have been tested. Some peptide transferase activity is however not excluded, considering that its appropriate peptide substrate may remain unidentified. The chain is Probable N-acetylgalactosaminyltransferase 8 (gly-8) from Caenorhabditis elegans.